The chain runs to 284 residues: Diaminopimelate epimerase (284 aa).

Substrate contacts are provided by Asn-13 and Asn-66. Cys-75 functions as the Proton donor in the catalytic mechanism. Residues 76–77 (GN), Asn-166, Asn-199, and 217–218 (ER) contribute to the substrate site. The active-site Proton acceptor is Cys-226. 227 to 228 (GT) is a binding site for substrate.

The protein belongs to the diaminopimelate epimerase family. In terms of assembly, homodimer.

It localises to the cytoplasm. The catalysed reaction is (2S,6S)-2,6-diaminopimelate = meso-2,6-diaminopimelate. The protein operates within amino-acid biosynthesis; L-lysine biosynthesis via DAP pathway; DL-2,6-diaminopimelate from LL-2,6-diaminopimelate: step 1/1. Catalyzes the stereoinversion of LL-2,6-diaminopimelate (L,L-DAP) to meso-diaminopimelate (meso-DAP), a precursor of L-lysine and an essential component of the bacterial peptidoglycan. The chain is Diaminopimelate epimerase from Halothermothrix orenii (strain H 168 / OCM 544 / DSM 9562).